A 333-amino-acid polypeptide reads, in one-letter code: Biotin synthase (333 aa).

Positions 47–276 (YYGKKVKLNM…TKEIRISGGR (230 aa)) constitute a Radical SAM core domain. Cysteine 65, cysteine 69, and cysteine 72 together coordinate [4Fe-4S] cluster. The [2Fe-2S] cluster site is built by cysteine 109, cysteine 141, cysteine 201, and arginine 271.

This sequence belongs to the radical SAM superfamily. Biotin synthase family. Homodimer. [4Fe-4S] cluster is required as a cofactor. Requires [2Fe-2S] cluster as cofactor.

It carries out the reaction (4R,5S)-dethiobiotin + (sulfur carrier)-SH + 2 reduced [2Fe-2S]-[ferredoxin] + 2 S-adenosyl-L-methionine = (sulfur carrier)-H + biotin + 2 5'-deoxyadenosine + 2 L-methionine + 2 oxidized [2Fe-2S]-[ferredoxin]. The protein operates within cofactor biosynthesis; biotin biosynthesis; biotin from 7,8-diaminononanoate: step 2/2. In terms of biological role, catalyzes the conversion of dethiobiotin (DTB) to biotin by the insertion of a sulfur atom into dethiobiotin via a radical-based mechanism. This chain is Biotin synthase, found in Bacillus licheniformis (strain ATCC 14580 / DSM 13 / JCM 2505 / CCUG 7422 / NBRC 12200 / NCIMB 9375 / NCTC 10341 / NRRL NRS-1264 / Gibson 46).